Reading from the N-terminus, the 161-residue chain is Probable cell wall elongation regulator TseB (161 aa).

Over 1 to 5 (MRKKA) the chain is Cytoplasmic. Residues 6–26 (LIFTVIFGIIFLAVLLVSASI) traverse the membrane as a helical segment. At 27 to 161 (YKSAMAQKEE…TGKILKNITP (135 aa)) the chain is on the extracellular side.

In terms of assembly, interacts with the penicillin-binding protein PBP2A, a monofunctional transpeptidase.

The protein localises to the cell membrane. Functionally, required for normal cell shape. Plays an important role in cell wall elongation during exponential phase and spore outgrowth. Probably regulates the activity of the penicillin-binding protein PBP2A through a direct interaction. Not required for PBP2A activity, stability and localization. The polypeptide is Probable cell wall elongation regulator TseB (Bacillus subtilis (strain 168)).